The sequence spans 257 residues: Thiazole synthase (257 aa).

The Schiff-base intermediate with DXP role is filled by Lys-96. 1-deoxy-D-xylulose 5-phosphate is bound by residues Gly-157, 184–185 (AG), and 206–207 (NT).

This sequence belongs to the ThiG family. In terms of assembly, homotetramer. Forms heterodimers with either ThiH or ThiS.

It localises to the cytoplasm. The catalysed reaction is [ThiS sulfur-carrier protein]-C-terminal-Gly-aminoethanethioate + 2-iminoacetate + 1-deoxy-D-xylulose 5-phosphate = [ThiS sulfur-carrier protein]-C-terminal Gly-Gly + 2-[(2R,5Z)-2-carboxy-4-methylthiazol-5(2H)-ylidene]ethyl phosphate + 2 H2O + H(+). It functions in the pathway cofactor biosynthesis; thiamine diphosphate biosynthesis. Its function is as follows. Catalyzes the rearrangement of 1-deoxy-D-xylulose 5-phosphate (DXP) to produce the thiazole phosphate moiety of thiamine. Sulfur is provided by the thiocarboxylate moiety of the carrier protein ThiS. In vitro, sulfur can be provided by H(2)S. This is Thiazole synthase from Bartonella quintana (strain Toulouse) (Rochalimaea quintana).